Here is a 94-residue protein sequence, read N- to C-terminus: Long neurotoxin LNTX37 (94 aa).

Positions 1-21 are cleaved as a signal peptide; the sequence is MKTLLLTLVVVTIMCLDLGYT. 5 disulfides stabilise this stretch: Cys-24–Cys-43, Cys-36–Cys-64, Cys-49–Cys-53, Cys-68–Cys-79, and Cys-80–Cys-85.

Belongs to the three-finger toxin family. Long-chain subfamily. Type II alpha-neurotoxin sub-subfamily. In terms of tissue distribution, expressed by the venom gland.

The protein resides in the secreted. Its function is as follows. Binds with high affinity to muscular (alpha-1/CHRNA1) and neuronal (alpha-7/CHRNA7) nicotinic acetylcholine receptor (nAChR) and inhibits acetylcholine from binding to the receptor, thereby impairing neuromuscular and neuronal transmission. In Ophiophagus hannah (King cobra), this protein is Long neurotoxin LNTX37.